The sequence spans 121 residues: Small ribosomal subunit protein uS13 (121 aa).

A disordered region spans residues 94–121; the sequence is GLPVRGQRTRTNARTRKGPRKGAAALKK.

This sequence belongs to the universal ribosomal protein uS13 family. In terms of assembly, part of the 30S ribosomal subunit. Forms a loose heterodimer with protein S19. Forms two bridges to the 50S subunit in the 70S ribosome.

In terms of biological role, located at the top of the head of the 30S subunit, it contacts several helices of the 16S rRNA. In the 70S ribosome it contacts the 23S rRNA (bridge B1a) and protein L5 of the 50S subunit (bridge B1b), connecting the 2 subunits; these bridges are implicated in subunit movement. Contacts the tRNAs in the A and P-sites. This is Small ribosomal subunit protein uS13 from Verminephrobacter eiseniae (strain EF01-2).